The primary structure comprises 824 residues: uncharacterized protein (824 aa).

This is an uncharacterized protein from Caenorhabditis elegans.